A 130-amino-acid polypeptide reads, in one-letter code: Anti-adapter protein IraD (130 aa).

This sequence belongs to the GpW/Gp25 family. IraD subfamily. In terms of assembly, interacts with RssB.

It is found in the cytoplasm. In terms of biological role, inhibits RpoS proteolysis by regulating RssB activity, thereby increasing the stability of the sigma stress factor RpoS during oxidative stress. Its effect on RpoS stability is due to its interaction with RssB, which probably blocks the interaction of RssB with RpoS, and the consequent delivery of the RssB-RpoS complex to the ClpXP protein degradation pathway. The polypeptide is Anti-adapter protein IraD (Escherichia coli O45:K1 (strain S88 / ExPEC)).